Reading from the N-terminus, the 204-residue chain is Putative glutathione S-transferase alpha-3 (204 aa).

N-acetylthreonine is present on T2. The region spanning 2 to 79 (TKPQLSYFKV…YIASQHDFVG (78 aa)) is the GST N-terminal domain. Glutathione-binding positions include Y8, 49 to 50 (QL), and 63 to 64 (QS). One can recognise a GST C-terminal domain in the interval 81-202 (TPEEKALVDE…YLKNRPITER (122 aa)).

The protein belongs to the GST superfamily. Alpha family.

The enzyme catalyses RX + glutathione = an S-substituted glutathione + a halide anion + H(+). Functionally, conjugation of reduced glutathione to a wide number of exogenous and endogenous hydrophobic electrophiles. In Dictyostelium discoideum (Social amoeba), this protein is Putative glutathione S-transferase alpha-3 (gsta3).